A 107-amino-acid chain; its full sequence is Quaternary ammonium compound-resistance protein QacC (107 aa).

The Cytoplasmic portion of the chain corresponds to 1-2 (MP). A helical transmembrane segment spans residues 3–20 (YIYLIIAISTEVIGSAFL). Over 21-29 (KSSEGFSKF) the chain is Extracellular. A helical membrane pass occupies residues 30–47 (IPSLGTIISFGICFYFLS). Residues 48–56 (KTMQHLPLN) are Cytoplasmic-facing. Residues 57–75 (ITYATWAGLGLVLTTVVSI) form a helical membrane-spanning segment. Residues 76–85 (IIFKEQINLI) lie on the Extracellular side of the membrane. A helical membrane pass occupies residues 86-103 (TIVSIVLIIVGVVSLNIF). Over 104–107 (GTSH) the chain is Cytoplasmic.

The protein belongs to the drug/metabolite transporter (DMT) superfamily. Small multidrug resistance (SMR) (TC 2.A.7.1) family.

The protein resides in the cell membrane. Ethidium export is inhibited by N-ethylmaleimide (NEM). Its function is as follows. Multidrug exporter. Is implicated for the resistance to bacteriocidal quaternary ammonium compounds and ethidium bromide. The protein is Quaternary ammonium compound-resistance protein QacC of Staphylococcus aureus.